The sequence spans 256 residues: MQFTPPFEQGVLLRRYKRFLTDIRLSDGSEVTIHCPNTGSMKNCLFPGEKVWFSTSDNPKRKYSRTWEQAESDVGHIIGINTGRANQLAEDAIKAGVITELSGYHSLKREVKYGSENSRIDILLSDDTGSTDTSFSGTPPTNTEPANTKAKPNCYVEVKSCTLLEEGQGYFPDAVTTRGQKHLRELMEMVESGHRGVLLFVVQHTGIDSVQAAAHIDPDYASLLTKAHSAGVEVIAYSAEMSPKGASLLKSCPVKL.

Low complexity predominate over residues 128 to 141; sequence TGSTDTSFSGTPPT. The segment at 128–149 is disordered; it reads TGSTDTSFSGTPPTNTEPANTK.

It belongs to the SfsA family.

This chain is Sugar fermentation stimulation protein homolog, found in Shewanella sediminis (strain HAW-EB3).